We begin with the raw amino-acid sequence, 66 residues long: Period circadian protein (66 aa).

Positions 1–66 (EGSGGSGSSG…VTLTESLLNK (66 aa)) are disordered. Over residues 9–31 (SGNFTTGSNIHMSSVTNTSNAGT) the composition is skewed to low complexity. 4 consecutive repeat copies span residues 30–31 (GT), 32–33 (GT), 35–36 (GT), and 37–38 (GN). The tract at residues 30 to 53 (GTGTSGTGNSGGGSGGGTGPGSGA) is 4 X 2 AA tandem repeats of G-[TN]. Positions 32-51 (GTSGTGNSGGGSGGGTGPGS) are enriched in gly residues.

Forms a heterodimer with timeless (TIM); the complex then translocates into the nucleus. Phosphorylated with a circadian rhythmicity, probably by the double-time protein (dbt). Phosphorylation could be implicated in the stability of per monomer and in the formation of heterodimer per-tim.

Its subcellular location is the nucleus. The protein resides in the cytoplasm. It localises to the perinuclear region. Its function is as follows. Essential for biological clock functions. Determines the period length of circadian and ultradian rhythms; an increase in PER dosage leads to shortened circadian rhythms and a decrease leads to lengthened circadian rhythms. Essential for the circadian rhythmicity of locomotor activity, eclosion behavior, and for the rhythmic component of the male courtship song that originates in the thoracic nervous system. The biological cycle depends on the rhythmic formation and nuclear localization of the TIM-PER complex. Light induces the degradation of TIM, which promotes elimination of PER. Nuclear activity of the heterodimer coordinatively regulates PER and TIM transcription through a negative feedback loop. Behaves as a negative element in circadian transcriptional loop. Does not appear to bind DNA, suggesting indirect transcriptional inhibition. The polypeptide is Period circadian protein (per) (Drosophila saltans (Fruit fly)).